A 226-amino-acid chain; its full sequence is Thiamine-phosphate synthase (226 aa).

4-amino-2-methyl-5-(diphosphooxymethyl)pyrimidine is bound by residues 46–50 (QFRDK) and D83. The Mg(2+) site is built by D84 and D103. Residue S122 coordinates 4-amino-2-methyl-5-(diphosphooxymethyl)pyrimidine. 149-151 (TQS) is a 2-[(2R,5Z)-2-carboxy-4-methylthiazol-5(2H)-ylidene]ethyl phosphate binding site. Residue K152 coordinates 4-amino-2-methyl-5-(diphosphooxymethyl)pyrimidine. 2-[(2R,5Z)-2-carboxy-4-methylthiazol-5(2H)-ylidene]ethyl phosphate-binding positions include G181 and 201-202 (IT).

This sequence belongs to the thiamine-phosphate synthase family. Mg(2+) is required as a cofactor.

The enzyme catalyses 2-[(2R,5Z)-2-carboxy-4-methylthiazol-5(2H)-ylidene]ethyl phosphate + 4-amino-2-methyl-5-(diphosphooxymethyl)pyrimidine + 2 H(+) = thiamine phosphate + CO2 + diphosphate. It carries out the reaction 2-(2-carboxy-4-methylthiazol-5-yl)ethyl phosphate + 4-amino-2-methyl-5-(diphosphooxymethyl)pyrimidine + 2 H(+) = thiamine phosphate + CO2 + diphosphate. The catalysed reaction is 4-methyl-5-(2-phosphooxyethyl)-thiazole + 4-amino-2-methyl-5-(diphosphooxymethyl)pyrimidine + H(+) = thiamine phosphate + diphosphate. The protein operates within cofactor biosynthesis; thiamine diphosphate biosynthesis; thiamine phosphate from 4-amino-2-methyl-5-diphosphomethylpyrimidine and 4-methyl-5-(2-phosphoethyl)-thiazole: step 1/1. In terms of biological role, condenses 4-methyl-5-(beta-hydroxyethyl)thiazole monophosphate (THZ-P) and 2-methyl-4-amino-5-hydroxymethyl pyrimidine pyrophosphate (HMP-PP) to form thiamine monophosphate (TMP). The sequence is that of Thiamine-phosphate synthase from Haemophilus influenzae (strain PittGG).